The chain runs to 185 residues: Probable chorismate pyruvate-lyase (185 aa).

The substrate site is built by R80, L118, and E170.

It belongs to the UbiC family.

It localises to the cytoplasm. It carries out the reaction chorismate = 4-hydroxybenzoate + pyruvate. Its pathway is cofactor biosynthesis; ubiquinone biosynthesis. In terms of biological role, removes the pyruvyl group from chorismate, with concomitant aromatization of the ring, to provide 4-hydroxybenzoate (4HB) for the ubiquinone pathway. The protein is Probable chorismate pyruvate-lyase of Pseudomonas putida (strain ATCC 47054 / DSM 6125 / CFBP 8728 / NCIMB 11950 / KT2440).